Consider the following 411-residue polypeptide: Prostaglandin E2 receptor EP3 subtype (411 aa).

Residues 1–49 (MKETRGDGGSAPFCTRLNHSYPGMWAPEARGNLTRPPGPGEDCGSVSVA) are Extracellular-facing. N-linked (GlcNAc...) asparagine glycans are attached at residues Asn18 and Asn32. The helical transmembrane segment at 50 to 74 (FPITMLITGFVGNALAMLLVSRSYR) threads the bilayer. At 75–87 (RRESKRKKSFLLC) the chain is on the cytoplasmic side. The chain crosses the membrane as a helical span at residues 88–108 (IGWLALTDLVGQLLTSPVVIL). At 109-127 (VYLSKQRWEQLDPSGRLCT) the chain is on the extracellular side. The cysteines at positions 126 and 204 are disulfide-linked. The helical transmembrane segment at 128–149 (FFGLTMTVFGLSSLFIASAMAV) threads the bilayer. Residues 150 to 171 (ERALAIRAPHWYASHMKTRATR) are Cytoplasmic-facing. The helical transmembrane segment at 172–193 (AVLLGVWLAVLAFALLPVLGVG) threads the bilayer. Topologically, residues 194–223 (QYTIQWPGTWCFISTGRGDNGTSSSHNWGN) are extracellular. N-linked (GlcNAc...) asparagine glycosylation occurs at Asn213. A helical transmembrane segment spans residues 224-249 (LFFASTFAFLGLLALAITFTCNLATI). Residues 250-279 (KALVSRCRAKAAASQSSAQWGRITTETAIQ) are Cytoplasmic-facing. A helical membrane pass occupies residues 280 to 303 (LMGIMCVLSVCWSPLLIMMLKMIF). Over 304-323 (NQTSVEHCKTDTGKQKECNF) the chain is Extracellular. A helical transmembrane segment spans residues 324 to 345 (FLIAVRLASLNQILDPWVYLLL). Residues 346–411 (RKILLRKFCQ…ADPGARPYQQ (66 aa)) are Cytoplasmic-facing. A compositionally biased stretch (basic and acidic residues) spans 367–390 (IQRENRNVSHSGQHEEARDSEKSK). Residues 367–392 (IQRENRNVSHSGQHEEARDSEKSKTI) are disordered.

This sequence belongs to the G-protein coupled receptor 1 family. Interacts (via C-terminus) with MKLN1. In the kidney cortex and medulla, adrenal gland and stomach. In kidney, expression is higher in tubules in the outer medulla, with lower levels in cortex. In kidney cortex, expression is restricted to distal tubules.

It is found in the cell membrane. Functionally, receptor for prostaglandin E2 (PGE2). Required for normal development of fever in response to pyrinogens, including IL1B, prostaglandin E2 and bacterial lipopolysaccharide (LPS). Required for normal potentiation of platelet aggregation by prostaglandin E2, and thus plays a role in the regulation of blood coagulation. Required for increased HCO3(-) secretion in the duodenum in response to mucosal acidification, and thereby contributes to the protection of the mucosa against acid-induced ulceration. Not required for normal kidney function, normal urine volume and osmolality. In Oryctolagus cuniculus (Rabbit), this protein is Prostaglandin E2 receptor EP3 subtype (PTGER3).